We begin with the raw amino-acid sequence, 431 residues long: UDP-N-acetylglucosamine 1-carboxyvinyltransferase (431 aa).

Lys22–Asn23 provides a ligand contact to phosphoenolpyruvate. Arg102 serves as a coordination point for UDP-N-acetyl-alpha-D-glucosamine. Cys126 acts as the Proton donor in catalysis. Cys126 carries the 2-(S-cysteinyl)pyruvic acid O-phosphothioketal modification. The UDP-N-acetyl-alpha-D-glucosamine site is built by Asp318 and Ile340.

It belongs to the EPSP synthase family. MurA subfamily.

It is found in the cytoplasm. The catalysed reaction is phosphoenolpyruvate + UDP-N-acetyl-alpha-D-glucosamine = UDP-N-acetyl-3-O-(1-carboxyvinyl)-alpha-D-glucosamine + phosphate. Its pathway is cell wall biogenesis; peptidoglycan biosynthesis. Cell wall formation. Adds enolpyruvyl to UDP-N-acetylglucosamine. The polypeptide is UDP-N-acetylglucosamine 1-carboxyvinyltransferase (Bartonella tribocorum (strain CIP 105476 / IBS 506)).